A 254-amino-acid polypeptide reads, in one-letter code: Alcohol dehydrogenase 2 (254 aa).

10–33 (FVAGLGGIGFDTSREIVKSGPKNL) is an NAD(+) binding site. Ser-138 contributes to the substrate binding site. The Proton acceptor role is filled by Tyr-151.

The protein belongs to the short-chain dehydrogenases/reductases (SDR) family. As to quaternary structure, homodimer.

The enzyme catalyses a primary alcohol + NAD(+) = an aldehyde + NADH + H(+). It catalyses the reaction a secondary alcohol + NAD(+) = a ketone + NADH + H(+). The sequence is that of Alcohol dehydrogenase 2 (Adh2) from Drosophila mulleri (Fruit fly).